The sequence spans 537 residues: Synaptotagmin-2 (537 aa).

Topologically, residues 1–2 are cytoplasmic; it reads MG. Residues 3–23 traverse the membrane as a helical segment; it reads IISTILGVIGFGFGTTIGIVI. Over 24 to 537 the chain is Lumenal; it reads GYYLFIYFQS…QIELQWRNSS (514 aa). One can recognise an SMP-LTD domain in the interval 67-249; sequence DFDRIDWLNK…WPKTLNVQIM (183 aa). A phospholipid binding region spans residues 227–505; the sequence is QEIIKDQVAN…TLGYVVINLG (279 aa). C2 domains are found at residues 240-362 and 402-517; these read WPKT…LMTL and DPNA…NDKY. Positions 276, 282, 332, and 334 each coordinate Ca(2+).

It belongs to the synaptotagmin family. The cofactor is Ca(2+).

The protein resides in the golgi apparatus membrane. In terms of biological role, may play an important role in regulating an unconventional protein trafficking from the cytosol to the extracellular matrix. This is Synaptotagmin-2 (SYT2) from Arabidopsis thaliana (Mouse-ear cress).